A 185-amino-acid polypeptide reads, in one-letter code: 4-nitrophenol 4-monooxygenase/4-nitrocatechol 2-monooxygenase, reductase component (185 aa).

It belongs to the non-flavoprotein flavin reductase family. In terms of assembly, the 4-NP/4-NCA monooxygenase is composed of an oxygenase component NpcA and a reductase component NpcB.

It carries out the reaction 4-nitrophenol + NADH + O2 + H(+) = 4-nitrocatechol + NAD(+) + H2O. The catalysed reaction is 4-nitrocatechol + NADPH + O2 = 2-hydroxy-1,4-benzoquinone + nitrite + NADP(+) + H2O. The enzyme catalyses 4-nitrocatechol + NADH + O2 = 2-hydroxy-1,4-benzoquinone + nitrite + NAD(+) + H2O. Its pathway is aromatic compound metabolism. It functions in the pathway xenobiotic degradation. With respect to regulation, inhibited by methimazole. Involved in the degradation of para-nitrophenol (4-NP). Catalyzes both the initial hydroxylation of 4-NP to produce 4-nitrocatechol (4-NCA) and the subsequent oxidative release of the nitro group from 4-NCA to produce 2-hydroxy-1,4-benzoquinone. It can also use 4-nitroresorcinol as substrate with a rate of nitrite release similar to that observed with the two physiological substrates, 4-PN and 4-NCA. The chain is 4-nitrophenol 4-monooxygenase/4-nitrocatechol 2-monooxygenase, reductase component (npcB) from Rhodococcus opacus (Nocardia opaca).